Here is a 163-residue protein sequence, read N- to C-terminus: Phosphopantetheine adenylyltransferase (163 aa).

Threonine 10 contributes to the substrate binding site. Residues 10–11 (TF) and histidine 18 contribute to the ATP site. Substrate-binding residues include lysine 42, leucine 75, and arginine 89. Residues 90–92 (GVR), glutamate 100, and 125–131 (YTYVASS) each bind ATP.

This sequence belongs to the bacterial CoaD family. As to quaternary structure, homohexamer. The cofactor is Mg(2+).

It localises to the cytoplasm. It catalyses the reaction (R)-4'-phosphopantetheine + ATP + H(+) = 3'-dephospho-CoA + diphosphate. Its pathway is cofactor biosynthesis; coenzyme A biosynthesis; CoA from (R)-pantothenate: step 4/5. Functionally, reversibly transfers an adenylyl group from ATP to 4'-phosphopantetheine, yielding dephospho-CoA (dPCoA) and pyrophosphate. The sequence is that of Phosphopantetheine adenylyltransferase from Pelodictyon phaeoclathratiforme (strain DSM 5477 / BU-1).